Here is a 1096-residue protein sequence, read N- to C-terminus: DNA-directed RNA polymerase subunit beta (1096 aa).

It belongs to the RNA polymerase beta chain family. As to quaternary structure, in plastids the minimal PEP RNA polymerase catalytic core is composed of four subunits: alpha, beta, beta', and beta''. When a (nuclear-encoded) sigma factor is associated with the core the holoenzyme is formed, which can initiate transcription.

The protein localises to the plastid. Its subcellular location is the chloroplast. It carries out the reaction RNA(n) + a ribonucleoside 5'-triphosphate = RNA(n+1) + diphosphate. Its function is as follows. DNA-dependent RNA polymerase catalyzes the transcription of DNA into RNA using the four ribonucleoside triphosphates as substrates. This Guillardia theta (Cryptophyte) protein is DNA-directed RNA polymerase subunit beta.